The primary structure comprises 319 residues: tRNA uridine(34) hydroxylase (319 aa).

Positions 127–221 (KQEDTVIIDA…YGKDPEVQGE (95 aa)) constitute a Rhodanese domain. C181 functions as the Cysteine persulfide intermediate in the catalytic mechanism.

It belongs to the TrhO family.

It catalyses the reaction uridine(34) in tRNA + AH2 + O2 = 5-hydroxyuridine(34) in tRNA + A + H2O. Its function is as follows. Catalyzes oxygen-dependent 5-hydroxyuridine (ho5U) modification at position 34 in tRNAs. The chain is tRNA uridine(34) hydroxylase from Bacillus cereus (strain Q1).